The following is a 597-amino-acid chain: Probable E3 ubiquitin-protein ligase ARI1 (597 aa).

The tract at residues serine 119–glutamine 333 is TRIAD supradomain. Cysteine 123, cysteine 126, cysteine 140, histidine 142, cysteine 145, cysteine 148, cysteine 167, cysteine 172, cysteine 214, cysteine 220, cysteine 236, cysteine 238, cysteine 243, cysteine 246, histidine 251, cysteine 256, cysteine 283, and cysteine 286 together coordinate Zn(2+). Residues cysteine 123 to cysteine 172 form an RING-type 1 zinc finger. The IBR-type zinc-finger motif lies at alanine 194–cysteine 256. The segment at cysteine 283–cysteine 311 adopts an RING-type 2; atypical zinc-finger fold. Cysteine 296 is an active-site residue. 6 residues coordinate Zn(2+): cysteine 301, cysteine 303, cysteine 308, cysteine 311, histidine 319, and cysteine 329. Positions phenylalanine 536–glycine 575 are disordered. The span at aspartate 540–glutamine 568 shows a compositional bias: polar residues.

Belongs to the RBR family. Ariadne subfamily. Requires Zn(2+) as cofactor. Ubiquitous.

The enzyme catalyses [E2 ubiquitin-conjugating enzyme]-S-ubiquitinyl-L-cysteine + [acceptor protein]-L-lysine = [E2 ubiquitin-conjugating enzyme]-L-cysteine + [acceptor protein]-N(6)-ubiquitinyl-L-lysine.. The protein operates within protein modification; protein ubiquitination. In terms of biological role, might act as an E3 ubiquitin-protein ligase, or as part of E3 complex, which accepts ubiquitin from specific E2 ubiquitin-conjugating enzymes and then transfers it to substrates. The polypeptide is Probable E3 ubiquitin-protein ligase ARI1 (ARI1) (Arabidopsis thaliana (Mouse-ear cress)).